The sequence spans 427 residues: Sensor histidine kinase ArsS (427 aa).

A run of 2 helical transmembrane segments spans residues 3-23 and 131-151; these read FSIF…FGAF and NYFL…LFVL. The HAMP domain occupies 151–203; it reads LQSLLPLRELRSQVKPFAQGDKSVSCKSKQKDEIGDLANEFDNCILKINAMNE. The region spanning 211–398 is the Histidine kinase domain; that stretch reads SIMHELRTPI…LSYHYSNGRI (188 aa). Histidine 214 is modified (phosphohistidine; by autocatalysis).

In terms of processing, autophosphorylated.

The protein resides in the membrane. It catalyses the reaction ATP + protein L-histidine = ADP + protein N-phospho-L-histidine.. Its function is as follows. Member of the two-component regulatory system ArsS/ArsR that regulates genes involved in biofilm formation and acid adaptation by acting on major ammonia-producing pathways. Functions as a sensor protein kinase which is autophosphorylated at a histidine residue and transfers its phosphate group to the conserved aspartic acid residue in the regulatory domain of ArsR. In turn, ArsR binds to the upstream promoter regions of target genes including ureA, amiE and amiF to positively regulate their expression in response to acidic pH. Also participates in acidic acclimatation in a phosphorylation-independent pathway by regulating acid-induced trafficking of urease and its accessory proteins to the inner membrane. The chain is Sensor histidine kinase ArsS from Helicobacter pylori (strain ATCC 700392 / 26695) (Campylobacter pylori).